The following is a 607-amino-acid chain: Pogo transposable element with KRAB domain (607 aa).

A coiled-coil region spans residues 8-29; it reads LNLTLKEEQKEEEVEIQELEDG. Lys13 is covalently cross-linked (Glycyl lysine isopeptide (Lys-Gly) (interchain with G-Cter in SUMO2)). Residues 47–118 enclose the KRAB domain; the sequence is ALFDEVAIYF…DEWRLQGVTF (72 aa). Positions 250–323 constitute an HTH CENPB-type domain; the sequence is AFRGPKNGRF…MRRYDLSLRH (74 aa). The 213-residue stretch at 355 to 567 folds into the DDE-1 domain; it reads YEVAQMGNAD…ISSESIVQGF (213 aa). Lys384 participates in a covalent cross-link: Glycyl lysine isopeptide (Lys-Gly) (interchain with G-Cter in SUMO2). The tract at residues 588–607 is disordered; it reads GELPKEPPKECGPESVAEGD. Over residues 589 to 599 the composition is skewed to basic and acidic residues; that stretch reads ELPKEPPKECG.

It localises to the nucleus. This chain is Pogo transposable element with KRAB domain (Pogk), found in Mus musculus (Mouse).